We begin with the raw amino-acid sequence, 237 residues long: Putative exosome complex component rrp40 (237 aa).

In terms of domain architecture, S1 motif spans 67–137; that stretch reads EDMVIGTIIE…EPEVVCLSQK (71 aa).

The protein belongs to the RRP40 family. Component of the RNA exosome complex.

It is found in the cytoplasm. The protein localises to the nucleus. It localises to the nucleolus. Functionally, non-catalytic component of the RNA exosome complex which has 3'-&gt;5' exoribonuclease activity and participates in a multitude of cellular RNA processing and degradation events. This is Putative exosome complex component rrp40 (exosc3) from Dictyostelium discoideum (Social amoeba).